The following is a 373-amino-acid chain: Muscleblind-like protein 2 (373 aa).

4 consecutive C3H1-type zinc fingers follow at residues 13 to 41, 47 to 73, 176 to 204, and 212 to 238; these read WLTL…HPPK, NGRV…HPPT, TDKL…HPAD, and DNTV…HPPA.

It belongs to the muscleblind family. As to quaternary structure, interacts with ITGA3.

It localises to the nucleus. Its subcellular location is the cytoplasm. In terms of biological role, mediates pre-mRNA alternative splicing regulation. Acts either as activator or repressor of splicing on specific pre-mRNA targets. Inhibits cardiac troponin-T (TNNT2) pre-mRNA exon inclusion but induces insulin receptor (IR) pre-mRNA exon inclusion in muscle. Antagonizes the alternative splicing activity pattern of CELF proteins. RNA-binding protein that binds to 5'ACACCC-3' core sequence, termed zipcode, within the 3'UTR of ITGA3. Binds to CUG triplet repeat expansion in myotonic dystrophy muscle cells by sequestering the target RNAs. Together with RNA binding proteins RBPMS and RBFOX2, activates vascular smooth muscle cells alternative splicing events. Regulates NCOR2 alternative splicing. Seems to regulate expression and localization of ITGA3 by transporting it from the nucleus to cytoplasm at adhesion plaques. May play a role in myotonic dystrophy pathophysiology (DM). This Mus musculus (Mouse) protein is Muscleblind-like protein 2 (Mbnl2).